The primary structure comprises 426 residues: uncharacterized protein (426 aa).

This is an uncharacterized protein from Corynebacterium glutamicum (strain ATCC 13032 / DSM 20300 / JCM 1318 / BCRC 11384 / CCUG 27702 / LMG 3730 / NBRC 12168 / NCIMB 10025 / NRRL B-2784 / 534).